A 376-amino-acid polypeptide reads, in one-letter code: ORC1-type DNA replication protein 2 (376 aa).

Residues 73 to 77, Tyr-209, and Arg-221 contribute to the ATP site; that span reads TGKTS.

It belongs to the CDC6/cdc18 family.

Its function is as follows. Involved in regulation of DNA replication. This Archaeoglobus fulgidus (strain ATCC 49558 / DSM 4304 / JCM 9628 / NBRC 100126 / VC-16) protein is ORC1-type DNA replication protein 2 (cdc6-2).